A 413-amino-acid polypeptide reads, in one-letter code: Gamma-glutamyl phosphate reductase (413 aa).

It belongs to the gamma-glutamyl phosphate reductase family.

It is found in the cytoplasm. The enzyme catalyses L-glutamate 5-semialdehyde + phosphate + NADP(+) = L-glutamyl 5-phosphate + NADPH + H(+). Its pathway is amino-acid biosynthesis; L-proline biosynthesis; L-glutamate 5-semialdehyde from L-glutamate: step 2/2. Functionally, catalyzes the NADPH-dependent reduction of L-glutamate 5-phosphate into L-glutamate 5-semialdehyde and phosphate. The product spontaneously undergoes cyclization to form 1-pyrroline-5-carboxylate. This is Gamma-glutamyl phosphate reductase from Thermus thermophilus (strain ATCC BAA-163 / DSM 7039 / HB27).